The primary structure comprises 187 residues: MNLQHHFLIAMPALQDPLFRRSVVYICEHNPDGAMGLIINKPLENLQIEGILEKLKITPEPRDPAIRLDKPVMLGGPLAEDRGFILHTPPSRFASSIRISDNTVVTTSRDVLETIGTPKQPADVLVALGYASWEKGQLEQEILDNAWLTAPADLNILFKTPIADRWRDAAKLIGVDILTMPGVAGHA.

Belongs to the UPF0301 (AlgH) family.

The protein is UPF0301 protein YqgE of Escherichia fergusonii (strain ATCC 35469 / DSM 13698 / CCUG 18766 / IAM 14443 / JCM 21226 / LMG 7866 / NBRC 102419 / NCTC 12128 / CDC 0568-73).